The sequence spans 94 residues: ATP synthase subunit c (94 aa).

A run of 2 helical transmembrane segments spans residues 15-35 (IGVG…WGLI) and 58-78 (FIFA…AMWF).

This sequence belongs to the ATPase C chain family. F-type ATPases have 2 components, F(1) - the catalytic core - and F(0) - the membrane proton channel. F(1) has five subunits: alpha(3), beta(3), gamma(1), delta(1), epsilon(1). F(0) has three main subunits: a(1), b(2) and c(10-14). The alpha and beta chains form an alternating ring which encloses part of the gamma chain. F(1) is attached to F(0) by a central stalk formed by the gamma and epsilon chains, while a peripheral stalk is formed by the delta and b chains.

The protein localises to the cell inner membrane. Functionally, f(1)F(0) ATP synthase produces ATP from ADP in the presence of a proton or sodium gradient. F-type ATPases consist of two structural domains, F(1) containing the extramembraneous catalytic core and F(0) containing the membrane proton channel, linked together by a central stalk and a peripheral stalk. During catalysis, ATP synthesis in the catalytic domain of F(1) is coupled via a rotary mechanism of the central stalk subunits to proton translocation. Key component of the F(0) channel; it plays a direct role in translocation across the membrane. A homomeric c-ring of between 10-14 subunits forms the central stalk rotor element with the F(1) delta and epsilon subunits. This chain is ATP synthase subunit c, found in Hydrogenovibrio crunogenus (strain DSM 25203 / XCL-2) (Thiomicrospira crunogena).